The primary structure comprises 507 residues: Histidine ammonia-lyase (507 aa).

Positions 141 to 143 (ASG) form a cross-link, 5-imidazolinone (Ala-Gly). Residue Ser142 is modified to 2,3-didehydroalanine (Ser).

The protein belongs to the PAL/histidase family. Post-translationally, contains an active site 4-methylidene-imidazol-5-one (MIO), which is formed autocatalytically by cyclization and dehydration of residues Ala-Ser-Gly.

The protein resides in the cytoplasm. The enzyme catalyses L-histidine = trans-urocanate + NH4(+). The protein operates within amino-acid degradation; L-histidine degradation into L-glutamate; N-formimidoyl-L-glutamate from L-histidine: step 1/3. The sequence is that of Histidine ammonia-lyase from Burkholderia vietnamiensis (strain G4 / LMG 22486) (Burkholderia cepacia (strain R1808)).